Here is a 37-residue protein sequence, read N- to C-terminus: uncharacterized protein (37 aa).

The helical transmembrane segment at 1–21 (MQDLEIFLSIFAFIFVFYFGA) threads the bilayer.

It localises to the endoplasmic reticulum membrane. This is an uncharacterized protein from Saccharomyces cerevisiae (strain ATCC 204508 / S288c) (Baker's yeast).